The chain runs to 188 residues: MTIKSDKWIRRMAREQGMIEPFVERQVRTEGSERLISYGVSSYGYDVRCADEFKVFTNIHSATVDPKNFDERSFVDVKGAVCIIPPNSFALARTVEYFRIPRNVLTICLGKSTYARCGIIVNVTPLEPEWEGHVTLEFSNTTTLPAKIYANEGVAQMLFLESDEPCEVSYKDRGGKYQGQTGVTLPKT.

Residues 111 to 116, 135 to 137, glutamine 156, tyrosine 170, and glutamine 180 each bind dCTP; these read KSTYAR and TLE. Catalysis depends on glutamate 137, which acts as the Proton donor/acceptor.

The protein belongs to the dCTP deaminase family. In terms of assembly, homotrimer.

The catalysed reaction is dCTP + H2O + H(+) = dUTP + NH4(+). It participates in pyrimidine metabolism; dUMP biosynthesis; dUMP from dCTP (dUTP route): step 1/2. Functionally, catalyzes the deamination of dCTP to dUTP. The sequence is that of dCTP deaminase from Azotobacter vinelandii (strain DJ / ATCC BAA-1303).